Reading from the N-terminus, the 318-residue chain is tRNA-modifying protein YgfZ (318 aa).

Tryptophan 24 and tryptophan 185 together coordinate folate.

Belongs to the tRNA-modifying YgfZ family.

The protein resides in the cytoplasm. Folate-binding protein involved in regulating the level of ATP-DnaA and in the modification of some tRNAs. It is probably a key factor in regulatory networks that act via tRNA modification, such as initiation of chromosomal replication. The sequence is that of tRNA-modifying protein YgfZ from Buchnera aphidicola subsp. Baizongia pistaciae (strain Bp).